Here is a 370-residue protein sequence, read N- to C-terminus: Cap-specific mRNA (nucleoside-2'-O-)-methyltransferase 1 (370 aa).

The RrmJ-type SAM-dependent 2'-O-MTase domain maps to 87 to 294; it reads AFRNRAGHKL…ERYLVCIGFI (208 aa). S-adenosyl-L-methionine-binding residues include Gly-130 and Asp-207. The active-site Proton acceptor is the Lys-248.

Component of a complex composed of CBF5, GAR1, NHP2, MTR1, NOP10 and Tb11.01.8210.

It is found in the nucleus. The enzyme catalyses a 5'-end (N(7)-methyl 5'-triphosphoguanosine)-ribonucleoside in mRNA + S-adenosyl-L-methionine = a 5'-end (N(7)-methyl 5'-triphosphoguanosine)-(2'-O-methyl-ribonucleoside) in mRNA + S-adenosyl-L-homocysteine + H(+). Functionally, S-adenosyl-L-methionine-dependent methyltransferase that mediates RNA cap1 2'-O-ribose methylation to the 5'-cap structure of spliced leader and U1 small nuclear RNAs. Methylates the ribose of the first nucleotide of a m(7)GpppG-capped RNA to produce m(7)GpppNmp (cap1). Cap1 modification is linked to higher levels of translation. Recognizes a guanosine cap on RNA independent of its N(7) methylation status. This chain is Cap-specific mRNA (nucleoside-2'-O-)-methyltransferase 1 (MTR1), found in Trypanosoma brucei brucei (strain 927/4 GUTat10.1).